We begin with the raw amino-acid sequence, 586 residues long: Arginine--tRNA ligase (586 aa).

The short motif at 128 to 138 (ANPTGPLHVGH) is the 'HIGH' region element.

The protein belongs to the class-I aminoacyl-tRNA synthetase family. In terms of assembly, monomer.

The protein localises to the cytoplasm. The enzyme catalyses tRNA(Arg) + L-arginine + ATP = L-arginyl-tRNA(Arg) + AMP + diphosphate. The sequence is that of Arginine--tRNA ligase from Coxiella burnetii (strain RSA 331 / Henzerling II).